Here is a 52-residue protein sequence, read N- to C-terminus: Large ribosomal subunit protein eL40 (52 aa).

Positions 20, 23, 34, and 39 each coordinate Zn(2+).

This sequence belongs to the eukaryotic ribosomal protein eL40 family. As to quaternary structure, component of the large ribosomal subunit. Mature ribosomes consist of a small (40S) and a large (60S) subunit. The 40S subunit contains about 32 different proteins and 1 molecule of RNA (18S). The 60S subunit contains 45 different proteins and 3 molecules of RNA (25S, 5.8S and 5S). Requires Zn(2+) as cofactor.

The protein localises to the cytoplasm. In terms of biological role, component of the ribosome, a large ribonucleoprotein complex responsible for the synthesis of proteins in the cell. The small ribosomal subunit (SSU) binds messenger RNAs (mRNAs) and translates the encoded message by selecting cognate aminoacyl-transfer RNA (tRNA) molecules. The large subunit (LSU) contains the ribosomal catalytic site termed the peptidyl transferase center (PTC), which catalyzes the formation of peptide bonds, thereby polymerizing the amino acids delivered by tRNAs into a polypeptide chain. The nascent polypeptides leave the ribosome through a tunnel in the LSU and interact with protein factors that function in enzymatic processing, targeting, and the membrane insertion of nascent chains at the exit of the ribosomal tunnel. This Candida albicans (strain SC5314 / ATCC MYA-2876) (Yeast) protein is Large ribosomal subunit protein eL40.